The following is a 487-amino-acid chain: Glycogen synthase 2 (487 aa).

An ADP-alpha-D-glucose-binding site is contributed by lysine 12.

It belongs to the glycosyltransferase 1 family. Bacterial/plant glycogen synthase subfamily.

It catalyses the reaction [(1-&gt;4)-alpha-D-glucosyl](n) + ADP-alpha-D-glucose = [(1-&gt;4)-alpha-D-glucosyl](n+1) + ADP + H(+). It participates in glycan biosynthesis; glycogen biosynthesis. Synthesizes alpha-1,4-glucan chains using ADP-glucose. This is Glycogen synthase 2 from Methylococcus capsulatus (strain ATCC 33009 / NCIMB 11132 / Bath).